The primary structure comprises 334 residues: tRNA N6-adenosine threonylcarbamoyltransferase (334 aa).

Fe cation contacts are provided by His-107 and His-111. Substrate is bound by residues 129-133, Asp-162, Gly-175, and Asn-269; that span reads LVSGG. A Fe cation-binding site is contributed by Asp-297.

This sequence belongs to the KAE1 / TsaD family. It depends on Fe(2+) as a cofactor.

Its subcellular location is the cytoplasm. It catalyses the reaction L-threonylcarbamoyladenylate + adenosine(37) in tRNA = N(6)-L-threonylcarbamoyladenosine(37) in tRNA + AMP + H(+). Required for the formation of a threonylcarbamoyl group on adenosine at position 37 (t(6)A37) in tRNAs that read codons beginning with adenine. Is involved in the transfer of the threonylcarbamoyl moiety of threonylcarbamoyl-AMP (TC-AMP) to the N6 group of A37, together with TsaE and TsaB. TsaD likely plays a direct catalytic role in this reaction. The sequence is that of tRNA N6-adenosine threonylcarbamoyltransferase from Campylobacter concisus (strain 13826).